We begin with the raw amino-acid sequence, 242 residues long: Venom nerve growth factor 1 (242 aa).

The first 18 residues, 1 to 18, serve as a signal peptide directing secretion; sequence MSMLCYTLIIAFLIGIWA. A propeptide spanning residues 19 to 125 is cleaved from the precursor; that stretch reads APQSEDNVPL…ALNRNIQAKR (107 aa). 3 disulfides stabilise this stretch: Cys-139-Cys-203, Cys-181-Cys-231, and Cys-191-Cys-233.

Belongs to the NGF-beta family. As to quaternary structure, homodimer; non-covalently linked. As to expression, expressed by the venom gland.

It localises to the secreted. In terms of biological role, nerve growth factor is important for the development and maintenance of the sympathetic and sensory nervous systems. It stimulates division and differentiation of sympathetic and embryonic sensory neurons as well as basal forebrain cholinergic neurons in the brain. Its relevance in the snake venom is not clear. However, it has been shown to inhibit metalloproteinase-dependent proteolysis of platelet glycoprotein Ib alpha, suggesting a metalloproteinase inhibition to prevent metalloprotease autodigestion and/or protection against prey proteases. Binds a lipid between the two protein chains in the homodimer. The lipid-bound form promotes histamine relase from mouse mast cells, contrary to the lipid-free form. In Pseudechis australis (Mulga snake), this protein is Venom nerve growth factor 1.